We begin with the raw amino-acid sequence, 179 residues long: Crossover junction endodeoxyribonuclease RuvC (179 aa).

Active-site residues include D12, E72, and D144. Residues D12, E72, and D144 each coordinate Mg(2+).

This sequence belongs to the RuvC family. Homodimer which binds Holliday junction (HJ) DNA. The HJ becomes 2-fold symmetrical on binding to RuvC with unstacked arms; it has a different conformation from HJ DNA in complex with RuvA. In the full resolvosome a probable DNA-RuvA(4)-RuvB(12)-RuvC(2) complex forms which resolves the HJ. Mg(2+) is required as a cofactor.

Its subcellular location is the cytoplasm. It carries out the reaction Endonucleolytic cleavage at a junction such as a reciprocal single-stranded crossover between two homologous DNA duplexes (Holliday junction).. In terms of biological role, the RuvA-RuvB-RuvC complex processes Holliday junction (HJ) DNA during genetic recombination and DNA repair. Endonuclease that resolves HJ intermediates. Cleaves cruciform DNA by making single-stranded nicks across the HJ at symmetrical positions within the homologous arms, yielding a 5'-phosphate and a 3'-hydroxyl group; requires a central core of homology in the junction. The consensus cleavage sequence is 5'-(A/T)TT(C/G)-3'. Cleavage occurs on the 3'-side of the TT dinucleotide at the point of strand exchange. HJ branch migration catalyzed by RuvA-RuvB allows RuvC to scan DNA until it finds its consensus sequence, where it cleaves and resolves the cruciform DNA. The protein is Crossover junction endodeoxyribonuclease RuvC of Dechloromonas aromatica (strain RCB).